We begin with the raw amino-acid sequence, 691 residues long: NADH-ubiquinone oxidoreductase 75 kDa subunit (691 aa).

In terms of domain architecture, 2Fe-2S ferredoxin-type spans 1 to 78 (MVNVFVDGLS…NMKIFTNTPL (78 aa)). Residues cysteine 34, cysteine 45, cysteine 48, and cysteine 62 each contribute to the [2Fe-2S] cluster site. Residues 78 to 117 (LVKKAREGVLEFLLVNHPLDCPICDQGGECDLQDLTMVYG) enclose the 4Fe-4S His(Cys)3-ligated-type domain. Histidine 94, cysteine 98, cysteine 101, cysteine 107, cysteine 146, cysteine 149, cysteine 152, and cysteine 196 together coordinate [4Fe-4S] cluster. In terms of domain architecture, 4Fe-4S Mo/W bis-MGD-type spans 215-271 (LQSTESIDVSDAIGSNIRIDVRGSEIMRILPRLNEDVNEEWISDKARFCYDGLKRQR).

The protein belongs to the complex I 75 kDa subunit family. Complex I is composed of about 30 different subunits. [2Fe-2S] cluster is required as a cofactor. Requires [4Fe-4S] cluster as cofactor.

It localises to the mitochondrion inner membrane. It carries out the reaction a ubiquinone + NADH + 5 H(+)(in) = a ubiquinol + NAD(+) + 4 H(+)(out). Functionally, core subunit of the mitochondrial membrane respiratory chain NADH dehydrogenase (Complex I) that is believed to belong to the minimal assembly required for catalysis. Complex I functions in the transfer of electrons from NADH to the respiratory chain. The immediate electron acceptor for the enzyme is believed to be ubiquinone. This is the largest subunit of complex I and it is a component of the iron-sulfur (IP) fragment of the enzyme. It may form part of the active site crevice where NADH is oxidized. The polypeptide is NADH-ubiquinone oxidoreductase 75 kDa subunit (NAD11) (Reclinomonas americana).